We begin with the raw amino-acid sequence, 464 residues long: UDP-glycosyltransferase 76F2 (464 aa).

UDP-alpha-D-glucose contacts are provided by residues serine 279, 338 to 340 (VNQ), 355 to 363 (HCGWNSTIE), and 377 to 380 (FSDQ).

This sequence belongs to the UDP-glycosyltransferase family.

This chain is UDP-glycosyltransferase 76F2 (UGT76F2), found in Arabidopsis thaliana (Mouse-ear cress).